The primary structure comprises 428 residues: Tyrosine--tRNA ligase (428 aa).

Tyr-41 serves as a coordination point for L-tyrosine. The short motif at 46 to 55 (PTADSLHLGH) is the 'HIGH' region element. N6-acetyllysine is present on Lys-148. Residues Tyr-179 and Gln-183 each contribute to the L-tyrosine site. Positions 239–243 (KFGKT) match the 'KMSKS' region motif. Lys-242 is an ATP binding site. Residues 361–418 (ADLMQALVDSELQPSRGQARKTIASNAITINGEKQSDPEYFFKEEDRLFGRFTLLRRG) form the S4 RNA-binding domain.

It belongs to the class-I aminoacyl-tRNA synthetase family. TyrS type 1 subfamily. In terms of assembly, homodimer.

The protein resides in the cytoplasm. It carries out the reaction tRNA(Tyr) + L-tyrosine + ATP = L-tyrosyl-tRNA(Tyr) + AMP + diphosphate + H(+). Catalyzes the attachment of tyrosine to tRNA(Tyr) in a two-step reaction: tyrosine is first activated by ATP to form Tyr-AMP and then transferred to the acceptor end of tRNA(Tyr). This is Tyrosine--tRNA ligase from Escherichia coli O1:K1 / APEC.